A 209-amino-acid chain; its full sequence is High frequency lysogenization protein HflD homolog (209 aa).

Belongs to the HflD family.

The protein localises to the cytoplasm. It is found in the cell inner membrane. This is High frequency lysogenization protein HflD homolog from Proteus mirabilis (strain HI4320).